The sequence spans 213 residues: Kynurenine formamidase (213 aa).

Substrate is bound at residue Trp-18. Zn(2+) is bound by residues His-48, His-52, and Asp-54. Catalysis depends on His-58, which acts as the Proton donor/acceptor. Residues His-160 and Glu-172 each coordinate Zn(2+).

It belongs to the Cyclase 1 superfamily. KynB family. As to quaternary structure, homodimer. Zn(2+) is required as a cofactor.

It catalyses the reaction N-formyl-L-kynurenine + H2O = L-kynurenine + formate + H(+). The protein operates within amino-acid degradation; L-tryptophan degradation via kynurenine pathway; L-kynurenine from L-tryptophan: step 2/2. Functionally, catalyzes the hydrolysis of N-formyl-L-kynurenine to L-kynurenine, the second step in the kynurenine pathway of tryptophan degradation. The chain is Kynurenine formamidase from Burkholderia mallei (strain NCTC 10247).